Reading from the N-terminus, the 555-residue chain is Sulfite reductase [ferredoxin] 1 (555 aa).

The 3'-(S-cysteinyl)-tyrosine (Tyr-Cys) cross-link spans 69 to 161; the sequence is YTQREQGYDG…SVGLQTTEAC (93 aa). Positions 417, 423, 463, and 467 each coordinate [4Fe-4S] cluster. Cysteine 467 is a binding site for siroheme.

The protein belongs to the nitrite and sulfite reductase 4Fe-4S domain family. As to quaternary structure, monomer. It depends on siroheme as a cofactor. [4Fe-4S] cluster is required as a cofactor.

It catalyses the reaction hydrogen sulfide + 6 oxidized [2Fe-2S]-[ferredoxin] + 3 H2O = sulfite + 6 reduced [2Fe-2S]-[ferredoxin] + 7 H(+). Catalyzes the reduction of sulfite to sulfide, a step in the biosynthesis of sulfur-containing amino acids and cofactors. The polypeptide is Sulfite reductase [ferredoxin] 1 (sir1) (Mycolicibacterium paratuberculosis (strain ATCC BAA-968 / K-10) (Mycobacterium paratuberculosis)).